The chain runs to 417 residues: Serine--tRNA ligase (417 aa).

232-234 is a binding site for L-serine; it reads TAE. ATP contacts are provided by residues 263–265 and valine 279; that span reads RRE. An L-serine-binding site is contributed by glutamate 286. Residue 350-353 participates in ATP binding; it reads EISS. Serine 385 is an L-serine binding site.

Belongs to the class-II aminoacyl-tRNA synthetase family. Type-1 seryl-tRNA synthetase subfamily. Homodimer. The tRNA molecule binds across the dimer.

It is found in the cytoplasm. It carries out the reaction tRNA(Ser) + L-serine + ATP = L-seryl-tRNA(Ser) + AMP + diphosphate + H(+). It catalyses the reaction tRNA(Sec) + L-serine + ATP = L-seryl-tRNA(Sec) + AMP + diphosphate + H(+). Its pathway is aminoacyl-tRNA biosynthesis; selenocysteinyl-tRNA(Sec) biosynthesis; L-seryl-tRNA(Sec) from L-serine and tRNA(Sec): step 1/1. Catalyzes the attachment of serine to tRNA(Ser). Is also able to aminoacylate tRNA(Sec) with serine, to form the misacylated tRNA L-seryl-tRNA(Sec), which will be further converted into selenocysteinyl-tRNA(Sec). The protein is Serine--tRNA ligase of Leptospira interrogans serogroup Icterohaemorrhagiae serovar copenhageni (strain Fiocruz L1-130).